The primary structure comprises 545 residues: Intercellular adhesion molecule 1 (545 aa).

The first 27 residues, 1 to 27 (MASTRARPMLPLLLVLVAVVIPGPVGA), serve as a signal peptide directing secretion. Residues 28-492 (QVSIHPTEAF…HLTVLYHDQN (465 aa)) are Extracellular-facing. Ig-like C2-type domains are found at residues 41 to 103 (GGSV…QSSA) and 128 to 193 (GKNL…LDLR). N-linked (GlcNAc...) asparagine glycosylation is present at N47. 3 cysteine pairs are disulfide-bonded: C48–C92, C52–C96, and C135–C186. Residue N154 is glycosylated (N-linked (GlcNAc...) asparagine). The Cell attachment site signature appears at 177 to 179 (RGD). Residues N183 and N202 are each glycosylated (N-linked (GlcNAc...) asparagine). Positions 230 to 297 (GTQQKFLCSL…LRCVLELADQ (68 aa)) constitute an Ig-like C2-type 3 domain. A disulfide bridge links C237 with C290. N-linked (GlcNAc...) asparagine glycans are attached at residues N309, N344, N396, N417, N439, and N464. The region spanning 325-389 (GDQVTVKCEA…FFCSAALEVD (65 aa)) is the Ig-like C2-type 4 domain. A disulfide bond links C332 and C382. The segment at 343–365 (LNSTSPRPPTSQGTSPRPPTSQI) is disordered. 3 cysteine pairs are disulfide-bonded: C414–C430, C430–C469, and C442–C469. Residues 423–476 (GSQQTLTCQPQGNPAPNLTCSRKADGVPLPIGMVKSVKREMNGTYKCRAFSSRG) form the Ig-like C2-type 5 domain. The helical transmembrane segment at 493–517 (TWVIIVGVLVLIIAGFVIVASIYTY) threads the bilayer. At 518 to 545 (YRQRKIRIYKLQKAQEEALKLKVQAPPP) the chain is on the cytoplasmic side.

Belongs to the immunoglobulin superfamily. ICAM family. Homodimer. Interacts with MUC1 and promotes cell aggregation in epithelial cells. Interacts with ARHGEF26/SGEF. Interacts (on T cell side) with CD81, CD247 and CD9 at immunological synapses between antigen-presenting cells and T cells. Monoubiquitinated, which is promoted by MARCH9 and leads to endocytosis.

Its subcellular location is the membrane. Its function is as follows. ICAM proteins are ligands for the leukocyte adhesion protein LFA-1 (integrin alpha-L/beta-2). During leukocyte trans-endothelial migration, ICAM1 engagement promotes the assembly of endothelial apical cups through ARHGEF26/SGEF and RHOG activation. The sequence is that of Intercellular adhesion molecule 1 (Icam1) from Rattus norvegicus (Rat).